Here is a 445-residue protein sequence, read N- to C-terminus: Sensor protein kinase CarS (445 aa).

An N-terminal signal peptide occupies residues 1–24; that stretch reads MRSIQRRLSVGLFAVLLVVGLVLA. Residues 150–170 traverse the membrane as a helical segment; the sequence is FARVQWMGLGAGALALLLVLL. One can recognise an HAMP domain in the interval 177 to 228; that stretch reads RRSLRPLEEVRLQIAQLQQGQRSQLDNQAPEELEPLVEQINHLLAHTEETLK. Residues 236 to 438 enclose the Histidine kinase domain; it reads NLGHALKTPL…RVSVELPLQK (203 aa). At His-239 the chain carries Phosphohistidine; by autocatalysis.

It is found in the membrane. The catalysed reaction is ATP + protein L-histidine = ADP + protein N-phospho-L-histidine.. In terms of biological role, member of the two-component regulatory system CarS/CarR that regulates the expression of multiple genes involved in calcium signaling and homeostasis including CarO and CarP. May function as a membrane-associated protein kinase that phosphorylates CarR in response to environmental signals leading to activation of specific gene promoters. The polypeptide is Sensor protein kinase CarS (carS) (Pseudomonas aeruginosa (strain ATCC 15692 / DSM 22644 / CIP 104116 / JCM 14847 / LMG 12228 / 1C / PRS 101 / PAO1)).